The chain runs to 333 residues: Protein FanF (333 aa).

The first 22 residues, 1–22 (MKNKYNLLFFLFLLCYGDVALA), serve as a signal peptide directing secretion.

Three disulfide bonds are present.

It is found in the fimbrium. In terms of biological role, minor component of K99 fimbriae. Is not required for binding of K99 fimbriae to the ganglioside receptor. May play a role in initiation, elongation and flexibility of the fimbriae. In Escherichia coli, this protein is Protein FanF (fanF).